A 552-amino-acid chain; its full sequence is MDRGAVVGFLLGVCVVSCLAGTPKTSWRRVSVGEDVSLLPAPGPTGRGPTQKLLWAVEPLDGCGPLHPSWXSLMPPKQVPETVVDAACMRAPVPLAMAYAPPAPSATGGLRTDFVWQERAAVVNRSLVIYGVRETDSGLYTLSVGDIKDPARQVASVVLVVQPAPVPTPPPTPADYDEDDNDEGEGEDESLAGTPASGTPRLPPPPAPPRSWPSAPEVSHVRGVTVRMETPEAILFSPGEAFSTNVSIHAIAHDDQTYTMDVVWLRFDVPTSCAEMRIYESCLYHPQLPECLSPADAPCAASTWTSRLAVRSYAGCSRTNPPPRCSAEAHMEPVPGLAWQAASVNLEFRDASPQHSGLYLCVVYVNDHIHAWGHITISTAAXYRNAVVEQPLPQRGADLAEPTHPHVGAPPHAPPTHGALRLGAVMGAALLLSVLGLSVWACMTCWRRRAWRAVKSRASGKGPTYIRVADSELYADWSSDSEGERDQVPWLAPPERPDSPSTNGSGFEILSPTAPSVYPRSDGHQSRRQLTTFGSGRPDRRYSQASDSSVFW.

The signal sequence occupies residues 1 to 20 (MDRGAVVGFLLGVCVVSCLA). The Virion surface portion of the chain corresponds to 21–421 (GTPKTSWRRV…HAPPTHGALR (401 aa)). The interaction with gI stretch occupies residues 63 to 88 (CGPLHPSWXSLMPPKQVPETVVDAAC). Asn124 is a glycosylation site (N-linked (GlcNAc...) asparagine; by host). Positions 162 to 216 (QPAPVPTPPPTPADYDEDDNDEGEGEDESLAGTPASGTPRLPPPPAPPRSWPSAP) are disordered. Positions 164–173 (APVPTPPPTP) are enriched in pro residues. Positions 175–190 (DYDEDDNDEGEGEDES) are enriched in acidic residues. Tyr176 is modified (sulfotyrosine; by host). The segment covering 201–211 (RLPPPPAPPRS) has biased composition (pro residues). Positions 237–382 (SPGEAFSTNV…GHITISTAAX (146 aa)) are fc-binding. N-linked (GlcNAc...) asparagine; by host glycosylation is present at Asn245. Cystine bridges form between Cys273/Cys299, Cys282/Cys291, and Cys316/Cys325. The tract at residues 396-415 (GADLAEPTHPHVGAPPHAPP) is disordered. A compositionally biased stretch (low complexity) spans 405 to 415 (PHVGAPPHAPP). Residues 422-442 (LGAVMGAALLLSVLGLSVWAC) form a helical membrane-spanning segment. At 443-552 (MTCWRRRAWR…SQASDSSVFW (110 aa)) the chain is on the intravirion side. 2 short sequence motifs (internalization motif) span residues 465 to 468 (YIRV) and 474 to 477 (YADW). Residues 472-497 (ELYADWSSDSEGERDQVPWLAPPERP) are interaction with VP22 and UL11. Phosphoserine; by host CK2 occurs at positions 478 and 479. The interval 478-486 (SSDSEGERD) is acidic. The disordered stretch occupies residues 478–552 (SSDSEGERDQ…SQASDSSVFW (75 aa)). Ser505 is modified (phosphoserine). Positions 543–552 (SQASDSSVFW) are enriched in polar residues.

It belongs to the alphaherpesvirinae glycoprotein E family. As to quaternary structure, interacts with gI; this interaction enhances the Fc receptor function of gE. The heterodimer gE/gI interacts with the Fc part of host IgG. Interacts (via C-terminus) with VP22 tegument protein; this interaction is necessary for the recruitment of VP22 to the Golgi and its packaging into virions. Interacts (via C-terminus) with UL11 tegument protein. In terms of processing, phosphorylated on serines within the acidic cluster. Phosphorylation determines whether endocytosed viral gE traffics to the trans-Golgi network or recycles to the cell membrane. N-glycosylated, and sulfated.

It is found in the virion membrane. It localises to the host cell membrane. The protein resides in the host cell junction. Its subcellular location is the host Golgi apparatus. The protein localises to the host trans-Golgi network. In terms of biological role, in epithelial cells, the heterodimer gE/gI is required for the cell-to-cell spread of the virus, by sorting nascent virions to cell junctions. Once the virus reaches the cell junctions, virus particles can spread to adjacent cells extremely rapidly through interactions with cellular receptors that accumulate at these junctions. Implicated in basolateral spread in polarized cells. In neuronal cells, gE/gI is essential for the anterograde spread of the infection throughout the host nervous system. Together with US9, the heterodimer gE/gI is involved in the sorting and transport of viral structural components toward axon tips. The heterodimer gE/gI serves as a receptor for the Fc part of host IgG. Dissociation of gE/gI from IgG occurs at acidic pH. May thus be involved in anti-HSV antibodies bipolar bridging, followed by intracellular endocytosis and degradation, thereby interfering with host IgG-mediated immune responses. The chain is Envelope glycoprotein E (gE) from Human herpesvirus 1 (strain F) (HHV-1).